Here is a 223-residue protein sequence, read N- to C-terminus: Adapter protein MecA (223 aa).

Belongs to the MecA family. In terms of assembly, homodimer.

Its function is as follows. Enables the recognition and targeting of unfolded and aggregated proteins to the ClpC protease or to other proteins involved in proteolysis. In Limosilactobacillus reuteri (strain DSM 20016) (Lactobacillus reuteri), this protein is Adapter protein MecA.